The following is a 74-amino-acid chain: Defensin (74 aa).

Positions 1-21 (MRGIYICLVFVLVCGLVSGLA) are cleaved as a signal peptide. The propeptide occupies 22–34 (DVPAESEMAHLRV). 3 cysteine pairs are disulfide-bonded: C40/C61, C47/C69, and C51/C71.

Expressed in the hemocytes, fat body and ovaries.

It is found in the secreted. Functionally, antibacterial peptide mostly active against Gram-positive bacteria. The sequence is that of Defensin from Rhipicephalus microplus (Cattle tick).